Here is a 286-residue protein sequence, read N- to C-terminus: Shikimate dehydrogenase (NADP(+)) (286 aa).

Shikimate-binding positions include 19–21 (SLS) and Thr-66. Lys-70 functions as the Proton acceptor in the catalytic mechanism. 2 residues coordinate shikimate: Asn-91 and Asp-107. NADP(+) contacts are provided by residues 129–133 (GSGGA) and Leu-229. Residue Tyr-231 participates in shikimate binding. Gly-252 serves as a coordination point for NADP(+).

This sequence belongs to the shikimate dehydrogenase family. Homodimer.

It catalyses the reaction shikimate + NADP(+) = 3-dehydroshikimate + NADPH + H(+). The protein operates within metabolic intermediate biosynthesis; chorismate biosynthesis; chorismate from D-erythrose 4-phosphate and phosphoenolpyruvate: step 4/7. Its function is as follows. Involved in the biosynthesis of the chorismate, which leads to the biosynthesis of aromatic amino acids. Catalyzes the reversible NADPH linked reduction of 3-dehydroshikimate (DHSA) to yield shikimate (SA). This chain is Shikimate dehydrogenase (NADP(+)), found in Prochlorococcus marinus (strain MIT 9215).